The following is a 375-amino-acid chain: 23S rRNA (uracil(747)-C(5))-methyltransferase RlmC (375 aa).

Residues C3, C11, C14, and C87 each coordinate [4Fe-4S] cluster. Positions 212, 241, 262, and 307 each coordinate S-adenosyl-L-methionine. Residue C334 is the Nucleophile of the active site.

Belongs to the class I-like SAM-binding methyltransferase superfamily. RNA M5U methyltransferase family. RlmC subfamily.

It catalyses the reaction uridine(747) in 23S rRNA + S-adenosyl-L-methionine = 5-methyluridine(747) in 23S rRNA + S-adenosyl-L-homocysteine + H(+). In terms of biological role, catalyzes the formation of 5-methyl-uridine at position 747 (m5U747) in 23S rRNA. The sequence is that of 23S rRNA (uracil(747)-C(5))-methyltransferase RlmC from Salmonella dublin (strain CT_02021853).